Reading from the N-terminus, the 548-residue chain is Copine-2 (548 aa).

C2 domains are found at residues 6-131 (DGGA…TRPL) and 138-263 (PAGK…PLEI). The Ca(2+) site is built by aspartate 39, aspartate 45, aspartate 97, aspartate 99, serine 102, aspartate 109, aspartate 170, aspartate 176, aspartate 232, aspartate 234, and aspartate 240. The interval 247 to 304 (TSVLQMSEARDGVPLEIECINPKKQRKKKSYKNSGIIILRSCKIHRNYSFLDYILGGC) is linker region. Residues 305 to 507 (QLMFTVGIDF…AARDIVQFVP (203 aa)) enclose the VWFA domain.

This sequence belongs to the copine family. It depends on Ca(2+) as a cofactor.

It localises to the cytoplasm. Its subcellular location is the nucleus. The protein localises to the cell membrane. Calcium-dependent phospholipid-binding protein that plays a role in calcium-mediated intracellular processes. Exhibits calcium-dependent cell membrane binding properties. In Mus musculus (Mouse), this protein is Copine-2.